The sequence spans 115 residues: MNPLIQSLTEGQLRTDIPSFRPGDTVRVHAKVVEGNRERIQIFEGVVISRKGQGISEMYTVRKISGGVGVERTFPIHTPRVDKIEVVRYGKVRRAKLYYLRALQGKAARIKEIRR.

Belongs to the bacterial ribosomal protein bL19 family.

In terms of biological role, this protein is located at the 30S-50S ribosomal subunit interface and may play a role in the structure and function of the aminoacyl-tRNA binding site. The protein is Large ribosomal subunit protein bL19 of Streptococcus suis (strain 98HAH33).